The following is a 379-amino-acid chain: Succinyl-diaminopimelate desuccinylase (379 aa).

Histidine 70 provides a ligand contact to Zn(2+). Residue aspartate 72 is part of the active site. Aspartate 103 lines the Zn(2+) pocket. Residue glutamate 137 is the Proton acceptor of the active site. Residues glutamate 138, glutamate 166, and histidine 352 each coordinate Zn(2+).

It belongs to the peptidase M20A family. DapE subfamily. As to quaternary structure, homodimer. Zn(2+) serves as cofactor. The cofactor is Co(2+).

The enzyme catalyses N-succinyl-(2S,6S)-2,6-diaminopimelate + H2O = (2S,6S)-2,6-diaminopimelate + succinate. It participates in amino-acid biosynthesis; L-lysine biosynthesis via DAP pathway; LL-2,6-diaminopimelate from (S)-tetrahydrodipicolinate (succinylase route): step 3/3. Catalyzes the hydrolysis of N-succinyl-L,L-diaminopimelic acid (SDAP), forming succinate and LL-2,6-diaminopimelate (DAP), an intermediate involved in the bacterial biosynthesis of lysine and meso-diaminopimelic acid, an essential component of bacterial cell walls. This Burkholderia pseudomallei (strain 1106a) protein is Succinyl-diaminopimelate desuccinylase.